A 207-amino-acid chain; its full sequence is Octanoyltransferase (207 aa).

One can recognise a BPL/LPL catalytic domain in the interval 27 to 203; the sequence is ADTEDELWVV…HLETQLTPKA (177 aa). Substrate contacts are provided by residues 66-73, 133-135, and 146-148; these read RGGQITYH, SLG, and GLA. Cysteine 164 serves as the catalytic Acyl-thioester intermediate.

The protein belongs to the LipB family.

The protein localises to the cytoplasm. It catalyses the reaction octanoyl-[ACP] + L-lysyl-[protein] = N(6)-octanoyl-L-lysyl-[protein] + holo-[ACP] + H(+). It functions in the pathway protein modification; protein lipoylation via endogenous pathway; protein N(6)-(lipoyl)lysine from octanoyl-[acyl-carrier-protein]: step 1/2. Functionally, catalyzes the transfer of endogenously produced octanoic acid from octanoyl-acyl-carrier-protein onto the lipoyl domains of lipoate-dependent enzymes. Lipoyl-ACP can also act as a substrate although octanoyl-ACP is likely to be the physiological substrate. The chain is Octanoyltransferase from Neisseria gonorrhoeae (strain ATCC 700825 / FA 1090).